Consider the following 154-residue polypeptide: Small ribosomal subunit protein uS15 (154 aa).

A compositionally biased stretch (basic residues) spans 1–10 (MARMHSRRRG). A disordered region spans residues 1 to 32 (MARMHSRRRGSSGSDRPTADEPPEWSEVDEDA). The span at 21–32 (EPPEWSEVDEDA) shows a compositional bias: acidic residues.

The protein belongs to the universal ribosomal protein uS15 family. Part of the 30S ribosomal subunit.

In Natronomonas pharaonis (strain ATCC 35678 / DSM 2160 / CIP 103997 / JCM 8858 / NBRC 14720 / NCIMB 2260 / Gabara) (Halobacterium pharaonis), this protein is Small ribosomal subunit protein uS15.